Reading from the N-terminus, the 228-residue chain is Urease accessory protein UreF (228 aa).

The protein belongs to the UreF family. As to quaternary structure, ureD, UreF and UreG form a complex that acts as a GTP-hydrolysis-dependent molecular chaperone, activating the urease apoprotein by helping to assemble the nickel containing metallocenter of UreC. The UreE protein probably delivers the nickel.

The protein resides in the cytoplasm. Functionally, required for maturation of urease via the functional incorporation of the urease nickel metallocenter. This is Urease accessory protein UreF from Lachnoclostridium phytofermentans (strain ATCC 700394 / DSM 18823 / ISDg) (Clostridium phytofermentans).